Reading from the N-terminus, the 235-residue chain is 1-(5-phosphoribosyl)-5-[(5-phosphoribosylamino)methylideneamino] imidazole-4-carboxamide isomerase (235 aa).

The active-site Proton acceptor is the aspartate 8. The active-site Proton donor is the aspartate 127.

Belongs to the HisA/HisF family.

The protein resides in the cytoplasm. It catalyses the reaction 1-(5-phospho-beta-D-ribosyl)-5-[(5-phospho-beta-D-ribosylamino)methylideneamino]imidazole-4-carboxamide = 5-[(5-phospho-1-deoxy-D-ribulos-1-ylimino)methylamino]-1-(5-phospho-beta-D-ribosyl)imidazole-4-carboxamide. It participates in amino-acid biosynthesis; L-histidine biosynthesis; L-histidine from 5-phospho-alpha-D-ribose 1-diphosphate: step 4/9. This Aliarcobacter butzleri (strain RM4018) (Arcobacter butzleri) protein is 1-(5-phosphoribosyl)-5-[(5-phosphoribosylamino)methylideneamino] imidazole-4-carboxamide isomerase.